The primary structure comprises 532 residues: Phosphoenolpyruvate carboxykinase (ATP) (532 aa).

Residues Arg60, Tyr194, and Lys200 each coordinate substrate. ATP contacts are provided by residues Lys200, His219, and 237–245 (GLSGTGKTT). Mn(2+) contacts are provided by Lys200 and His219. Mn(2+) is bound at residue Asp258. Positions 286, 324, and 449 each coordinate ATP. Arg324 lines the substrate pocket.

The protein belongs to the phosphoenolpyruvate carboxykinase (ATP) family. Mn(2+) serves as cofactor.

The protein resides in the cytoplasm. The enzyme catalyses oxaloacetate + ATP = phosphoenolpyruvate + ADP + CO2. Its pathway is carbohydrate biosynthesis; gluconeogenesis. In terms of biological role, involved in the gluconeogenesis. Catalyzes the conversion of oxaloacetate (OAA) to phosphoenolpyruvate (PEP) through direct phosphoryl transfer between the nucleoside triphosphate and OAA. This is Phosphoenolpyruvate carboxykinase (ATP) from Roseobacter denitrificans (strain ATCC 33942 / OCh 114) (Erythrobacter sp. (strain OCh 114)).